A 446-amino-acid chain; its full sequence is 3-phosphoshikimate 1-carboxyvinyltransferase (446 aa).

Lys-26, Ser-27, and Arg-31 together coordinate 3-phosphoshikimate. Lys-26 serves as a coordination point for phosphoenolpyruvate. Phosphoenolpyruvate-binding residues include Gly-100 and Arg-128. 6 residues coordinate 3-phosphoshikimate: Ser-171, Ser-172, Gln-173, Ser-200, Glu-315, and His-344. Position 173 (Gln-173) interacts with phosphoenolpyruvate. The active-site Proton acceptor is Glu-315. Phosphoenolpyruvate-binding residues include Arg-348, Arg-389, and Lys-414.

Belongs to the EPSP synthase family. Monomer.

It localises to the cytoplasm. It carries out the reaction 3-phosphoshikimate + phosphoenolpyruvate = 5-O-(1-carboxyvinyl)-3-phosphoshikimate + phosphate. The protein operates within metabolic intermediate biosynthesis; chorismate biosynthesis; chorismate from D-erythrose 4-phosphate and phosphoenolpyruvate: step 6/7. Functionally, catalyzes the transfer of the enolpyruvyl moiety of phosphoenolpyruvate (PEP) to the 5-hydroxyl of shikimate-3-phosphate (S3P) to produce enolpyruvyl shikimate-3-phosphate and inorganic phosphate. This is 3-phosphoshikimate 1-carboxyvinyltransferase from Mycolicibacterium gilvum (strain PYR-GCK) (Mycobacterium gilvum (strain PYR-GCK)).